A 508-amino-acid chain; its full sequence is Aromatase (508 aa).

Cys437 provides a ligand contact to heme.

It belongs to the cytochrome P450 family. Heme is required as a cofactor.

It localises to the membrane. The catalysed reaction is testosterone + 3 reduced [NADPH--hemoprotein reductase] + 3 O2 = 17beta-estradiol + formate + 3 oxidized [NADPH--hemoprotein reductase] + 4 H2O + 4 H(+). It carries out the reaction androst-4-ene-3,17-dione + 3 reduced [NADPH--hemoprotein reductase] + 3 O2 = estrone + formate + 3 oxidized [NADPH--hemoprotein reductase] + 4 H2O + 4 H(+). Its function is as follows. Catalyzes the formation of aromatic C18 estrogens from C19 androgens. This is Aromatase (Cyp19a1) from Rattus norvegicus (Rat).